A 384-amino-acid chain; its full sequence is 8-amino-7-oxononanoate synthase (384 aa).

Arg-21 is a substrate binding site. 108–109 (GF) contributes to the pyridoxal 5'-phosphate binding site. Residue His-133 participates in substrate binding. Positions 179, 207, and 233 each coordinate pyridoxal 5'-phosphate. Position 236 is an N6-(pyridoxal phosphate)lysine (Lys-236). Thr-352 contributes to the substrate binding site.

This sequence belongs to the class-II pyridoxal-phosphate-dependent aminotransferase family. BioF subfamily. Homodimer. It depends on pyridoxal 5'-phosphate as a cofactor.

The catalysed reaction is 6-carboxyhexanoyl-[ACP] + L-alanine + H(+) = (8S)-8-amino-7-oxononanoate + holo-[ACP] + CO2. Its pathway is cofactor biosynthesis; biotin biosynthesis. Functionally, catalyzes the decarboxylative condensation of pimeloyl-[acyl-carrier protein] and L-alanine to produce 8-amino-7-oxononanoate (AON), [acyl-carrier protein], and carbon dioxide. This Shigella boydii serotype 18 (strain CDC 3083-94 / BS512) protein is 8-amino-7-oxononanoate synthase.